The sequence spans 227 residues: N-acetyltransferase 8 (227 aa).

Topologically, residues 1–42 are cytoplasmic; that stretch reads MAPCHIRKYQESDRQWVVGLLSRGMAEHAPATFRQLLKLPRT. A helical; Signal-anchor for type II membrane protein membrane pass occupies residues 43–63; it reads LILLLGGPLALLLVSGSWLLA. The region spanning 61–220 is the N-acetyltransferase domain; that stretch reads LLALVFSISL…HTVHFIYHLP (160 aa). Residues 64-227 lie on the Lumenal side of the membrane; that stretch reads LVFSISLFPA…HLPSSKVGSL (164 aa).

Belongs to the NAT8 family. In terms of tissue distribution, preferentially expressed in liver and kidney. Also detected in brain (at protein level).

It localises to the endoplasmic reticulum-Golgi intermediate compartment membrane. Its subcellular location is the endoplasmic reticulum membrane. It carries out the reaction L-lysyl-[protein] + acetyl-CoA = N(6)-acetyl-L-lysyl-[protein] + CoA + H(+). The catalysed reaction is an S-substituted L-cysteine + acetyl-CoA = an N-acetyl-L-cysteine-S-conjugate + CoA + H(+). The protein operates within sulfur metabolism; glutathione metabolism. In terms of biological role, endoplasmic reticulum (ER)-membrane-bound lysine N-acetyltransferase catalyzing the N6-acetylation of lysine residues in the lumen of the ER in various proteins, including PROM1 and BACE1, using acetyl-CoA as acetyl donor. Thereby, may regulate apoptosis through the acetylation and the regulation of the expression of PROM1. May also regulate amyloid beta-peptide secretion through acetylation of BACE1 and the regulation of its expression in neurons. N(6)-lysine acetylation in the ER maintains protein homeostasis and regulates reticulophagy. Alternatively, acetylates the free alpha-amino group of cysteine S-conjugates to form mercapturic acids. This is the final step in a major route for detoxification of a wide variety of reactive electrophiles which starts with their incorporation into glutathione S-conjugates. The glutathione S-conjugates are then further processed into cysteine S-conjugates and finally mercapturic acids which are water soluble and can be readily excreted in urine or bile. This is N-acetyltransferase 8 from Homo sapiens (Human).